The following is an 86-amino-acid chain: Putative regulatory protein BBR47_37350 (86 aa).

This sequence belongs to the RemA family.

This is Putative regulatory protein BBR47_37350 from Brevibacillus brevis (strain 47 / JCM 6285 / NBRC 100599).